We begin with the raw amino-acid sequence, 548 residues long: Probable malate:quinone oxidoreductase (548 aa).

This sequence belongs to the MQO family. FAD is required as a cofactor.

It carries out the reaction (S)-malate + a quinone = a quinol + oxaloacetate. It functions in the pathway carbohydrate metabolism; tricarboxylic acid cycle; oxaloacetate from (S)-malate (quinone route): step 1/1. The protein is Probable malate:quinone oxidoreductase of Escherichia coli O127:H6 (strain E2348/69 / EPEC).